Consider the following 532-residue polypeptide: Pre-rRNA-processing protein pro-1 (532 aa).

WD repeat units lie at residues 136 to 175 (AHYQ…SADR) and 287 to 326 (GHSD…CLKV). The tract at residues 435 to 464 (TLGDDEDDAPEVGNQRRQNKKNNKKNRKLQ) is disordered. Residues 445–526 (EVGNQRRQNK…INRQMYEFVA (82 aa)) are a coiled coil. Positions 451 to 464 (RQNKKNNKKNRKLQ) are enriched in basic residues.

The protein belongs to the WD repeat IPI3/WDR18 family. As to quaternary structure, component of the PELP1 complex, composed of at least PELP1, TEX10 and WDR18. The complex interacts with pre-60S ribosome particles.

It is found in the nucleus. It localises to the nucleolus. Its subcellular location is the nucleoplasm. In terms of biological role, component of the PELP1 complex involved in the nucleolar steps of 28S rRNA maturation and the subsequent nucleoplasmic transit of the pre-60S ribosomal subunit. Required for processing ITS2 sequences from rRNA intermediates during 26S rRNA maturation. Required in the soma to promote normal proliferation and prevent germline tumor formation. In Caenorhabditis briggsae, this protein is Pre-rRNA-processing protein pro-1 (pro-1).